The primary structure comprises 385 residues: SH3 domain-binding protein 5-like (385 aa).

The interval 1–58 (MAELRQIPGGRETPQGELRPEVVEDEVPRSPVAEEPGGGGSNSSEAKLSPREEEELDP) is disordered. Position 13 is a phosphothreonine (Thr13). Residues 18–28 (LRPEVVEDEVP) show a composition bias toward basic and acidic residues. Ser30 and Ser49 each carry phosphoserine. 2 coiled-coil regions span residues 59-140 (RIQE…YERA) and 169-272 (WQEM…EQIH). The segment at 272-328 (HARRRGQPAHTPGQRRSSPVGAEAGPDGGEDADSGIIEGAEGGGLEEGVSLGPGAAP) is disordered. The span at 318-328 (EGVSLGPGAAP) shows a compositional bias: low complexity. Ser343, Ser350, Ser358, and Ser362 each carry phosphoserine. The tract at residues 359–385 (DHTSLDGQELGPRSGGRGGRHQRSISL) is disordered. Basic residues predominate over residues 376–385 (GGRHQRSISL).

Belongs to the SH3BP5 family.

Functions as a guanine nucleotide exchange factor (GEF) for RAB11A. In Bos taurus (Bovine), this protein is SH3 domain-binding protein 5-like (SH3BP5L).